Reading from the N-terminus, the 317-residue chain is Hairy/enhancer-of-split related with YRPW motif protein 1 (317 aa).

Positions 1–59 (MKRNHDFSSSDSELDENIEVEKESADENAGANSPLGSMSPSTTSQVQARKRRRGIIEKR) are disordered. The span at 30–47 (GANSPLGSMSPSTTSQVQ) shows a compositional bias: polar residues. The region spanning 48–103 (ARKRRRGIIEKRRRDRINNSLSELRRLVPSAFEKQGSAKLEKAEILQMTVDHLKML) is the bHLH domain. The 37-residue stretch at 121–157 (YRGLGFRECLAETARYLSIIEGLDNTDPLRIRLVSHL) folds into the Orange domain. 2 stretches are compositionally biased toward low complexity: residues 193 to 226 (QQQQ…SAPS) and 248 to 264 (PPST…TASK). A disordered region spans residues 193-264 (QQQQQQGAPL…PGLTPPTASK (72 aa)). A YRPW motif motif is present at residues 307–310 (YRPW).

This sequence belongs to the HEY family.

It is found in the nucleus. Transcriptional repressor which functions as a downstream effector of Notch signaling. This Danio rerio (Zebrafish) protein is Hairy/enhancer-of-split related with YRPW motif protein 1 (hey1).